A 594-amino-acid polypeptide reads, in one-letter code: MASSTPSSSATSSNAGADPNTTNLRPTTYDTWCGVAHGCTRKLGLKICGFLQRTNSLEEKSRLVSAFKERQSSKNLLSCENSDKDGRFRRTETDFSNLFARDLLPAKNGEEQTVQFLLEVVDILLNYVRKTFDRSTKVLDFHHPHQLLEGMEGFNLELSDHPESLEQILVDCRDTLKYGVRTGHPRFFNQLSTGLDIIGLAGEWLTSTANTNMFTYEIAPVFVLMEQITLKKMREIVGWSSKDGDGIFSPGGAISNMYSIMAARFKYFPEVKTKGMAAVPKLVLFTSEHSHYSIKKAGAALGFGTDNVILIKCNERGKIIPADLETKILEAKQKGYVPLYVNATAGTTVYGAFDPIQEIADICEKYNLWLHVDAAWGGGLLMSQKHRHKLSGIERANSVTWNPHKMMGVLLQCSAILVKEKGILQGCNQMCAGYLFQPDKQYDVSYDTGDKAIQCGRHVDIFKFWLMWKAKGTVGFENQINKCLELAEYLYAKIKNREEFEMVFDGEPEHTNVCFWYIPQSLRGVPDSPERREKLHRVAPKIKALMMESGTTMVGYQPQGDKANFFRMVISNPAATQSDIDFLIEEIERLGQDL.

The span at 1-13 shows a compositional bias: low complexity; it reads MASSTPSSSATSS. Residues 1 to 23 form a disordered region; that stretch reads MASSTPSSSATSSNAGADPNTTN. S78 is modified (phosphoserine). 190–192 contributes to the 4-aminobutanoate binding site; sequence QLS. K405 bears the N6-(pyridoxal phosphate)lysine mark. Residue R567 coordinates 4-aminobutanoate.

The protein belongs to the group II decarboxylase family. Homodimer. The cofactor is pyridoxal 5'-phosphate.

The enzyme catalyses L-glutamate + H(+) = 4-aminobutanoate + CO2. Its function is as follows. Catalyzes the synthesis of the inhibitory neurotransmitter gamma-aminobutyric acid (GABA) with pyridoxal 5'-phosphate as cofactor. The sequence is that of Glutamate decarboxylase 1 (GAD1) from Bos taurus (Bovine).